The primary structure comprises 174 residues: Acetolactate synthase small subunit (174 aa).

The 75-residue stretch at 4–78 folds into the ACT domain; sequence TLSVLVQDEA…NILNVQDVTN (75 aa).

This sequence belongs to the acetolactate synthase small subunit family. Dimer of large and small chains.

The protein localises to the plastid. Its subcellular location is the chloroplast. It carries out the reaction 2 pyruvate + H(+) = (2S)-2-acetolactate + CO2. It functions in the pathway amino-acid biosynthesis; L-isoleucine biosynthesis; L-isoleucine from 2-oxobutanoate: step 1/4. It participates in amino-acid biosynthesis; L-valine biosynthesis; L-valine from pyruvate: step 1/4. In Porphyra purpurea (Red seaweed), this protein is Acetolactate synthase small subunit (ilvH).